Here is a 150-residue protein sequence, read N- to C-terminus: Cytochrome c-type biogenesis protein CcmE (150 aa).

Over 1-7 the chain is Cytoplasmic; sequence MTRKQKR. A helical; Signal-anchor for type II membrane protein transmembrane segment spans residues 8-28; sequence LAIIGGGVAFLTAAVLLVMFA. Topologically, residues 29–150 are periplasmic; sequence FSQAVAYFYV…VTLGGEENIR (122 aa). His123 and Tyr127 together coordinate heme.

Belongs to the CcmE/CycJ family.

It is found in the cell inner membrane. In terms of biological role, heme chaperone required for the biogenesis of c-type cytochromes. Transiently binds heme delivered by CcmC and transfers the heme to apo-cytochromes in a process facilitated by CcmF and CcmH. This Rhizobium meliloti (strain 1021) (Ensifer meliloti) protein is Cytochrome c-type biogenesis protein CcmE.